Here is a 262-residue protein sequence, read N- to C-terminus: Small ribosomal subunit protein uS3 (262 aa).

The 69-residue stretch at Leu38–His106 folds into the KH type-2 domain. Residues Lys211–Ser262 are disordered. A compositionally biased stretch (gly residues) spans Gly243–Gly255.

Belongs to the universal ribosomal protein uS3 family. In terms of assembly, part of the 30S ribosomal subunit. Forms a tight complex with proteins S10 and S14.

Binds the lower part of the 30S subunit head. Binds mRNA in the 70S ribosome, positioning it for translation. This is Small ribosomal subunit protein uS3 from Roseiflexus sp. (strain RS-1).